We begin with the raw amino-acid sequence, 175 residues long: Ribosome-binding factor A (175 aa).

The tract at residues 131–175 (KPAGEADPYRDRGSVDEPSDAGGLVIRTSDGLEAENTGDDYQAED) is disordered. Acidic residues predominate over residues 162-175 (LEAENTGDDYQAED).

It belongs to the RbfA family. As to quaternary structure, monomer. Binds 30S ribosomal subunits, but not 50S ribosomal subunits or 70S ribosomes.

Its subcellular location is the cytoplasm. In terms of biological role, one of several proteins that assist in the late maturation steps of the functional core of the 30S ribosomal subunit. Associates with free 30S ribosomal subunits (but not with 30S subunits that are part of 70S ribosomes or polysomes). Required for efficient processing of 16S rRNA. May interact with the 5'-terminal helix region of 16S rRNA. This is Ribosome-binding factor A from Mycobacterium ulcerans (strain Agy99).